The sequence spans 849 residues: Cytosolic phospholipase A2 zeta (849 aa).

A C2 domain is found at 27–145 (EKRGPLWRHW…KCGQPHKHTF (119 aa)). 5 residues coordinate Ca(2+): aspartate 60, aspartate 66, aspartate 116, aspartate 118, and aspartate 123. The PLA2c domain occupies 306-849 (EMSSGDLDLR…RHQARERAGA (544 aa)). Catalysis depends on serine 395, which acts as the Nucleophile. Catalysis depends on aspartate 680, which acts as the Proton acceptor.

Ca(2+) serves as cofactor. Expressed in myocardium (at protein level).

The protein resides in the cytoplasm. It localises to the cytosol. Its subcellular location is the cell membrane. It is found in the mitochondrion. The enzyme catalyses a 1,2-diacyl-sn-glycero-3-phosphocholine + H2O = a 1-acyl-sn-glycero-3-phosphocholine + a fatty acid + H(+). It catalyses the reaction a 1-O-alkyl-2-acyl-sn-glycero-3-phosphocholine + H2O = a 1-O-alkyl-sn-glycero-3-phosphocholine + a fatty acid + H(+). It carries out the reaction 1-hexadecanoyl-2-(9Z-octadecenoyl)-sn-glycero-3-phosphocholine + H2O = 2-(9Z-octadecenoyl)-sn-glycero-3-phosphocholine + hexadecanoate + H(+). The catalysed reaction is 1-hexadecanoyl-2-(9Z,12Z-octadecadienoyl)-sn-glycero-3-phosphocholine + H2O = (9Z,12Z)-octadecadienoate + 1-hexadecanoyl-sn-glycero-3-phosphocholine + H(+). The enzyme catalyses 1-hexadecanoyl-2-(5Z,8Z,11Z,14Z-eicosatetraenoyl)-sn-glycero-3-phosphocholine + H2O = 1-hexadecanoyl-sn-glycero-3-phosphocholine + (5Z,8Z,11Z,14Z)-eicosatetraenoate + H(+). It catalyses the reaction 1-hexadecanoyl-2-(9Z,12Z-octadecadienoyl)-sn-glycero-3-phosphoethanolamine + H2O = 1-hexadecanoyl-sn-glycero-3-phosphoethanolamine + (9Z,12Z)-octadecadienoate + H(+). It carries out the reaction 1-hexadecanoyl-2-(5Z,8Z,11Z,14Z-eicosatetraenoyl)-sn-glycero-3-phosphoethanolamine + H2O = 1-hexadecanoyl-sn-glycero-3-phosphoethanolamine + (5Z,8Z,11Z,14Z)-eicosatetraenoate + H(+). The catalysed reaction is 1-(5Z,8Z,11Z,14Z-eicosatetraenoyl)-2-O-hexadecyl-sn-glycero-3-phosphocholine + H2O = 2-O-hexadecyl-sn-glycero-3-phosphocholine + (5Z,8Z,11Z,14Z)-eicosatetraenoate + H(+). The enzyme catalyses 1-O-hexadecyl-2-(5Z,8Z,11Z,14Z)-eicosatetraenoyl-sn-glycero-3-phosphocholine + H2O = 1-O-hexadecyl-sn-glycero-3-phosphocholine + (5Z,8Z,11Z,14Z)-eicosatetraenoate + H(+). It catalyses the reaction 1-hexadecanoyl-sn-glycero-3-phosphocholine + H2O = sn-glycerol 3-phosphocholine + hexadecanoate + H(+). Its activity is regulated as follows. Stimulated by cytosolic Ca(2+). Its function is as follows. Has calcium-dependent phospholipase and lysophospholipase activities with a potential role in membrane lipid remodeling and biosynthesis of lipid mediators. Preferentially hydrolyzes the ester bond of the fatty acyl group attached at sn-2 position of phospholipids (phospholipase A2 activity). Selectively hydrolyzes sn-2 arachidonoyl group from membrane phospholipids, providing the precursor for eicosanoid biosynthesis. In myocardial mitochondria, plays a major role in arachidonate release that is metabolically channeled to the formation of cardioprotective eicosanoids, epoxyeicosatrienoates (EETs). This is Cytosolic phospholipase A2 zeta (PLA2G4F) from Homo sapiens (Human).